Consider the following 153-residue polypeptide: Agglutinin (153 aa).

Residues 22-25 and Asn-46 contribute to the beta-D-galactosyl-(1-&gt;3)-N-acetyl-D-galactosamine site; that span reads NAWE. The Ricin B-type lectin domain occupies 58 to 153; sequence GDSAEYLIIN…DNQKWYFDAK (96 aa).

As to quaternary structure, homodimer.

Lectin that primarily recognizes glycans with a non-reducing terminal N-acetylgalactosamine (GalNAc), with a preference for the alpha- over the beta-anomer. Can also bind non-reducing terminal galactose (Gal) residues but with a lower affinity. Strongly interacts with glycolipid type glycans with terminal non-reducing Gal or GalNAc but fails to bind sialylated or fucosylated forms of the same glycans. Strongly interacts with galactosylated N-glycans, displaying highest affinity for alpha-1-3 branched mono-antennary N-glycans but also binding to multi-antennary glycans. The chain is Agglutinin from Sclerotinia sclerotiorum (strain ATCC 18683 / 1980 / Ss-1) (White mold).